Reading from the N-terminus, the 510-residue chain is Cytochrome c-552 (510 aa).

The signal sequence occupies residues 1-50; it reads MVVFLFILYRQSDLKFKSMNGVIIVNTLKKRLFVATTMIWGLSVTLPVLA. Histidine 124 contributes to the heme c binding site. The heme site is built by cysteine 152, cysteine 155, and lysine 156. Heme c is bound by residues cysteine 190, cysteine 193, histidine 194, cysteine 239, cysteine 242, and histidine 243. 4 residues coordinate Ca(2+): glutamate 245, tyrosine 246, lysine 291, and glutamine 293. Residue tyrosine 246 coordinates substrate. Histidine 294 is a substrate binding site. The heme c site is built by histidine 305, cysteine 312, cysteine 315, histidine 316, histidine 331, cysteine 344, cysteine 347, histidine 348, and histidine 423.

It belongs to the cytochrome c-552 family. The cofactor is Ca(2+). Requires heme c as cofactor.

The protein resides in the periplasm. The catalysed reaction is 6 Fe(III)-[cytochrome c] + NH4(+) + 2 H2O = 6 Fe(II)-[cytochrome c] + nitrite + 8 H(+). Its pathway is nitrogen metabolism; nitrate reduction (assimilation). Functionally, catalyzes the reduction of nitrite to ammonia, consuming six electrons in the process. The chain is Cytochrome c-552 from Pasteurella multocida (strain Pm70).